The chain runs to 225 residues: Enolase-phosphatase E1 (225 aa).

Belongs to the HAD-like hydrolase superfamily. MasA/MtnC family. As to quaternary structure, monomer. Requires Mg(2+) as cofactor.

The catalysed reaction is 5-methylsulfanyl-2,3-dioxopentyl phosphate + H2O = 1,2-dihydroxy-5-(methylsulfanyl)pent-1-en-3-one + phosphate. Its pathway is amino-acid biosynthesis; L-methionine biosynthesis via salvage pathway; L-methionine from S-methyl-5-thio-alpha-D-ribose 1-phosphate: step 3/6. It functions in the pathway amino-acid biosynthesis; L-methionine biosynthesis via salvage pathway; L-methionine from S-methyl-5-thio-alpha-D-ribose 1-phosphate: step 4/6. Functionally, bifunctional enzyme that catalyzes the enolization of 2,3-diketo-5-methylthiopentyl-1-phosphate (DK-MTP-1-P) into the intermediate 2-hydroxy-3-keto-5-methylthiopentenyl-1-phosphate (HK-MTPenyl-1-P), which is then dephosphorylated to form the acireductone 1,2-dihydroxy-3-keto-5-methylthiopentene (DHK-MTPene). The sequence is that of Enolase-phosphatase E1 from Shewanella loihica (strain ATCC BAA-1088 / PV-4).